Here is a 92-residue protein sequence, read N- to C-terminus: Elongation factor 1-beta (92 aa).

This sequence belongs to the EF-1-beta/EF-1-delta family.

In terms of biological role, promotes the exchange of GDP for GTP in EF-1-alpha/GDP, thus allowing the regeneration of EF-1-alpha/GTP that could then be used to form the ternary complex EF-1-alpha/GTP/AAtRNA. The chain is Elongation factor 1-beta from Pyrobaculum arsenaticum (strain DSM 13514 / JCM 11321 / PZ6).